A 274-amino-acid chain; its full sequence is Formamidopyrimidine-DNA glycosylase (274 aa).

Catalysis depends on Pro2, which acts as the Schiff-base intermediate with DNA. Glu3 acts as the Proton donor in catalysis. Lys59 serves as the catalytic Proton donor; for beta-elimination activity. His93, Arg112, and Lys153 together coordinate DNA. The segment at 238 to 272 (QVHTKFNKPCPNCGELIQKIKLGGRGTYFCKKCQQ) adopts an FPG-type zinc-finger fold. The Proton donor; for delta-elimination activity role is filled by Arg262.

It belongs to the FPG family. Monomer. The cofactor is Zn(2+).

It catalyses the reaction Hydrolysis of DNA containing ring-opened 7-methylguanine residues, releasing 2,6-diamino-4-hydroxy-5-(N-methyl)formamidopyrimidine.. The enzyme catalyses 2'-deoxyribonucleotide-(2'-deoxyribose 5'-phosphate)-2'-deoxyribonucleotide-DNA = a 3'-end 2'-deoxyribonucleotide-(2,3-dehydro-2,3-deoxyribose 5'-phosphate)-DNA + a 5'-end 5'-phospho-2'-deoxyribonucleoside-DNA + H(+). Its function is as follows. Involved in base excision repair of DNA damaged by oxidation or by mutagenic agents. Acts as a DNA glycosylase that recognizes and removes damaged bases. Has a preference for oxidized purines, such as 7,8-dihydro-8-oxoguanine (8-oxoG). Has AP (apurinic/apyrimidinic) lyase activity and introduces nicks in the DNA strand. Cleaves the DNA backbone by beta-delta elimination to generate a single-strand break at the site of the removed base with both 3'- and 5'-phosphates. The sequence is that of Formamidopyrimidine-DNA glycosylase from Mycoplasma mobile (strain ATCC 43663 / 163K / NCTC 11711) (Mesomycoplasma mobile).